The sequence spans 569 residues: 2-succinyl-5-enolpyruvyl-6-hydroxy-3-cyclohexene-1-carboxylate synthase (569 aa).

It belongs to the TPP enzyme family. MenD subfamily. Homodimer. It depends on Mg(2+) as a cofactor. Mn(2+) serves as cofactor. Requires thiamine diphosphate as cofactor.

It carries out the reaction isochorismate + 2-oxoglutarate + H(+) = 5-enolpyruvoyl-6-hydroxy-2-succinyl-cyclohex-3-ene-1-carboxylate + CO2. It participates in quinol/quinone metabolism; 1,4-dihydroxy-2-naphthoate biosynthesis; 1,4-dihydroxy-2-naphthoate from chorismate: step 2/7. The protein operates within cofactor biosynthesis; phylloquinone biosynthesis. Functionally, catalyzes the thiamine diphosphate-dependent decarboxylation of 2-oxoglutarate and the subsequent addition of the resulting succinic semialdehyde-thiamine pyrophosphate anion to isochorismate to yield 2-succinyl-5-enolpyruvyl-6-hydroxy-3-cyclohexene-1-carboxylate (SEPHCHC). This chain is 2-succinyl-5-enolpyruvyl-6-hydroxy-3-cyclohexene-1-carboxylate synthase, found in Microcystis aeruginosa (strain NIES-843 / IAM M-2473).